Reading from the N-terminus, the 157-residue chain is Transcription antitermination protein NusB (157 aa).

It belongs to the NusB family.

Its function is as follows. Involved in transcription antitermination. Required for transcription of ribosomal RNA (rRNA) genes. Binds specifically to the boxA antiterminator sequence of the ribosomal RNA (rrn) operons. This chain is Transcription antitermination protein NusB, found in Xylella fastidiosa (strain Temecula1 / ATCC 700964).